Here is a 405-residue protein sequence, read N- to C-terminus: L-carnitine CoA-transferase (405 aa).

Positions 97 and 104 each coordinate CoA. Catalysis depends on Asp169, which acts as the Nucleophile.

It belongs to the CoA-transferase III family. CaiB subfamily. As to quaternary structure, homodimer.

It is found in the cytoplasm. It carries out the reaction crotonobetainyl-CoA + (R)-carnitine = crotonobetaine + (R)-carnitinyl-CoA. The catalysed reaction is 4-(trimethylamino)butanoyl-CoA + (R)-carnitine = (R)-carnitinyl-CoA + 4-(trimethylamino)butanoate. The protein operates within amine and polyamine metabolism; carnitine metabolism. In terms of biological role, catalyzes the reversible transfer of the CoA moiety from gamma-butyrobetainyl-CoA to L-carnitine to generate L-carnitinyl-CoA and gamma-butyrobetaine. Is also able to catalyze the reversible transfer of the CoA moiety from gamma-butyrobetainyl-CoA or L-carnitinyl-CoA to crotonobetaine to generate crotonobetainyl-CoA. The sequence is that of L-carnitine CoA-transferase from Salmonella choleraesuis (strain SC-B67).